The sequence spans 715 residues: Coiled-coil domain-containing protein 170 (715 aa).

Coiled-coil stretches lie at residues 30-286 (VTRE…AGQQ), 360-418 (ESRD…LVSG), and 478-656 (ENKT…FREV). The tract at residues 355 to 591 (MDSREESRDR…DLNKSRDQLE (237 aa)) is required for binding to microtubules and Golgi apparatus location.

In terms of assembly, binds Golgi-associated microtubules.

It is found in the golgi apparatus. Plays a role in Golgi-associated microtubules organization and stabilization. The chain is Coiled-coil domain-containing protein 170 from Homo sapiens (Human).